The sequence spans 369 residues: 4-hydroxy-3-methylbut-2-en-1-yl diphosphate synthase (flavodoxin) (369 aa).

[4Fe-4S] cluster is bound by residues cysteine 270, cysteine 273, cysteine 305, and glutamate 312.

The protein belongs to the IspG family. It depends on [4Fe-4S] cluster as a cofactor.

The enzyme catalyses (2E)-4-hydroxy-3-methylbut-2-enyl diphosphate + oxidized [flavodoxin] + H2O + 2 H(+) = 2-C-methyl-D-erythritol 2,4-cyclic diphosphate + reduced [flavodoxin]. It participates in isoprenoid biosynthesis; isopentenyl diphosphate biosynthesis via DXP pathway; isopentenyl diphosphate from 1-deoxy-D-xylulose 5-phosphate: step 5/6. Functionally, converts 2C-methyl-D-erythritol 2,4-cyclodiphosphate (ME-2,4cPP) into 1-hydroxy-2-methyl-2-(E)-butenyl 4-diphosphate. The sequence is that of 4-hydroxy-3-methylbut-2-en-1-yl diphosphate synthase (flavodoxin) from Haemophilus ducreyi (strain 35000HP / ATCC 700724).